The primary structure comprises 39 residues: Photosystem II reaction center protein J (39 aa).

A helical transmembrane segment spans residues 7-27; the sequence is IPLWIVATVAGTGVLVVVGLF.

Belongs to the PsbJ family. As to quaternary structure, PSII is composed of 1 copy each of membrane proteins PsbA, PsbB, PsbC, PsbD, PsbE, PsbF, PsbH, PsbI, PsbJ, PsbK, PsbL, PsbM, PsbT, PsbX, PsbY, PsbZ, Psb30/Ycf12, peripheral proteins PsbO, CyanoQ (PsbQ), PsbU, PsbV and a large number of cofactors. It forms dimeric complexes.

The protein localises to the cellular thylakoid membrane. One of the components of the core complex of photosystem II (PSII). PSII is a light-driven water:plastoquinone oxidoreductase that uses light energy to abstract electrons from H(2)O, generating O(2) and a proton gradient subsequently used for ATP formation. It consists of a core antenna complex that captures photons, and an electron transfer chain that converts photonic excitation into a charge separation. The protein is Photosystem II reaction center protein J of Synechococcus elongatus (strain ATCC 33912 / PCC 7942 / FACHB-805) (Anacystis nidulans R2).